We begin with the raw amino-acid sequence, 161 residues long: uncharacterized protein (161 aa).

This is an uncharacterized protein from Haemophilus influenzae (strain ATCC 51907 / DSM 11121 / KW20 / Rd).